A 591-amino-acid polypeptide reads, in one-letter code: Acyl-CoA-dependent acyltransferase MAC1 (591 aa).

Residues 589–591 (ARL) form a peroxisomal targeting signal type 1 region.

The protein belongs to the trichothecene O-acetyltransferase family.

Its subcellular location is the peroxisome. Its pathway is secondary metabolite biosynthesis. Functionally, acyl-CoA-dependent acyltransferase; part of the gene cluster that mediates the biosynthesis of mannosylerythritol lipids (MELs), surface-active substances that enhance the availability of water-insoluble substrates. Mannosylerythritol lipid production is responsible for hemolytic activity of Ustilago maydis. Depending on the number of acetyl groups, mannosylerythritol lipids can be differentiated into MEL A (fully acetylated), MEL B and MEL C (monoacetylated at R-6 and R-4, respectively), and the fully deacetylated MEL D. The first step in the pathway is the generation of mannosylerythritol by the glycosyltransferase EMT1 which catalyzes the transfer of GDP-mannose to the C-4 atom of meso-erythritol. This reaction has to be stereospecific, since only mannosyl-D-erythritol is generated. The produced disaccharide is subsequently acylated with fatty acids of various lengths derived from the peroxisomal beta-oxidation by the peroxisomal acyltransferases MAC1 and MAC2 at positions C-2 and C-3, repectively. The existence of MEL derivatives which carry an acetyl group at C-2 implies that at least MAC1 also accepts acetyl-CoA as a donor. The final step of MEL biosynthesis is the acetylation of the fully acylated mannosylerythritol lipids catalyzed by the acetyl-CoA-dependent acetyltransferase MAT1. MAT1 displays a relaxed regioselectivity and is able to transfer acetylgroups to both positions C-4 and C-6 of the mannosyl moiety. The sequence is that of Acyl-CoA-dependent acyltransferase MAC1 from Mycosarcoma maydis (Corn smut fungus).